The sequence spans 122 residues: Structural protein p14.5 (122 aa).

2 disordered regions span residues 1–27 and 85–122; these read MADFNSPIQYLKEDSRDRTSIGSLEYD and TSLVPEETDNKPEDDEESGAKPKKKKHLFPKLSSHKSK. Position 2 is an N-acetylalanine; by host (alanine 2). Positions 105-122 are enriched in basic residues; the sequence is KPKKKKHLFPKLSSHKSK.

The protein belongs to the asfivirus structural protein p14.5 family. In terms of assembly, interacts with the major capsid protein. Interacts with host IRF3; this interaction interferes with the recruitment of IRF3 to TBK1. In terms of processing, acetylated.

The protein localises to the virion. Structural protein required for transport of intracellular particles from the assembly sites to the plasma membrane. Binds to both ssDNA and dsDNA. Suppressed the activation of the cGAS/STING pathway by interfering with the recruitment of IRF3 to TBK1, which in turn suppresses IRF3 phosphorylation, decreasing interferon production. This is Structural protein p14.5 from African swine fever virus (isolate Tick/Malawi/Lil 20-1/1983) (ASFV).